An 801-amino-acid chain; its full sequence is MNSTTTKNVCGDKWYLNLDRPEEALKILVFIAIFVVRTLLHYLMKPLGQPYLTTDFAIGLILGNIPRFRGAFSGPYSITLNNIIEFGMICHMFVMGLEMNPSVLLRPPTKDAFIAYTSMITTFVLAFVTTPFLHYTKTSPYIFSLALSLMASSTGSPILTRVIANLKIRKSDLGKLASAAGVHTDMISTLLYCFGFIFFPTEKPLARPLHRFFRALLMFCLFLAQVTFTSIVSPIFLNWVNNENPEGKPLKGSHLVMSLAFVVLICSFPTWPPESMYNPILSAFTAGLFLPNKGRMSKWIINKINYLLSTVFYPIFFFWVGFIIHMRNFDITDKMAWVRFFSLLGTVIAGKVTGTVLCGLLLGYHVPETASLGLLLTTKGHFHVYLAALAIRTNRVKSTTGALIIFIIVFTVVYSPFVVMDIIKRARKRVPVHIMALQWLDPTTELRILIGLHGPHNIGSTLNVMEICHGGREPGSIFYATDMVELTDEIAATLKKGGGAGQSNDSVTVTDRSVTEMRESITAAVNGYGELRNGQGVTVRRMLALSTFVTMAHDVCGLADELMVSIIILPFHKRLNPDGTLDAGHAGFRHVNRKILKNAPCSVGILVDRSFGQTEEAWRPGASMGIAIIFIGGRDDREALAFAAQVARHPAVKLKVIRFLEDKSSQNAQKRSSILNRASVVDQEEEMKLDDECFAEFYERYIAGGGRVSYMEKHLTNSSETFTALKSLDGEYGLVIVGRGGGRASSGLTTGLNDWQQCPELGPIGDVLSGSDFSHNTSMLIIQQQRTRGQLEGLHDDFTIL.

12 helical membrane passes run 24–44 (ALKI…HYLM), 77–97 (SITL…VMGL), 113–133 (FIAY…TPFL), 140–160 (PYIF…PILT), 179–199 (AAGV…FIFF), 216–236 (LLMF…SPIF), 252–272 (GSHL…PTWP), 275–292 (SMYN…FLPN), 304–324 (INYL…GFII), 343–363 (LLGT…LLLG), 371–391 (SLGL…ALAI), and 403–423 (LIIF…MDII).

Belongs to the monovalent cation:proton antiporter 2 (CPA2) transporter (TC 2.A.37) family. CHX (TC 2.A.37.4) subfamily. In terms of tissue distribution, specifically expressed in pollen.

Its subcellular location is the membrane. Its function is as follows. May operate as a cation/H(+) antiporter. The protein is Cation/H(+) antiporter 28 (CHX28) of Arabidopsis thaliana (Mouse-ear cress).